Reading from the N-terminus, the 410-residue chain is Riboflavin biosynthesis protein RibBA (410 aa).

The segment at 1 to 205 is DHBP synthase; sequence MENKRIDTIE…IKDLVAFQMR (205 aa). D-ribulose 5-phosphate contacts are provided by residues 30-31, aspartate 35, 144-148, and glutamate 168; these read RE and RVGHT. Glutamate 31 is a binding site for Mg(2+). Position 147 (histidine 147) interacts with Mg(2+). The segment at 206 to 410 is GTP cyclohydrolase II; it reads RSKLVQRAVE…ISCSCGSGNH (205 aa). 256-260 lines the GTP pocket; that stretch reads RVHSQ. Residues cysteine 261, cysteine 272, and cysteine 274 each contribute to the Zn(2+) site. GTP-binding positions include glutamine 277, 299 to 301, and threonine 321; that span reads EGR. Residue aspartate 333 is the Proton acceptor; for GTP cyclohydrolase activity of the active site. Arginine 335 functions as the Nucleophile; for GTP cyclohydrolase activity in the catalytic mechanism. Residues threonine 356 and lysine 361 each contribute to the GTP site.

It in the N-terminal section; belongs to the DHBP synthase family. In the C-terminal section; belongs to the GTP cyclohydrolase II family. Mg(2+) is required as a cofactor. Mn(2+) serves as cofactor. It depends on Zn(2+) as a cofactor.

It catalyses the reaction D-ribulose 5-phosphate = (2S)-2-hydroxy-3-oxobutyl phosphate + formate + H(+). It carries out the reaction GTP + 4 H2O = 2,5-diamino-6-hydroxy-4-(5-phosphoribosylamino)-pyrimidine + formate + 2 phosphate + 3 H(+). It functions in the pathway cofactor biosynthesis; riboflavin biosynthesis; 2-hydroxy-3-oxobutyl phosphate from D-ribulose 5-phosphate: step 1/1. The protein operates within cofactor biosynthesis; riboflavin biosynthesis; 5-amino-6-(D-ribitylamino)uracil from GTP: step 1/4. Functionally, catalyzes the conversion of D-ribulose 5-phosphate to formate and 3,4-dihydroxy-2-butanone 4-phosphate. In terms of biological role, catalyzes the conversion of GTP to 2,5-diamino-6-ribosylamino-4(3H)-pyrimidinone 5'-phosphate (DARP), formate and pyrophosphate. In Chlorobium phaeovibrioides (strain DSM 265 / 1930) (Prosthecochloris vibrioformis (strain DSM 265)), this protein is Riboflavin biosynthesis protein RibBA.